The following is a 418-amino-acid chain: Glutamyl-tRNA reductase (418 aa).

Residues Thr49–Arg52, Ser109, Glu114–Gln116, and Gln120 contribute to the substrate site. Catalysis depends on Cys50, which acts as the Nucleophile. Gly189–Ile194 lines the NADP(+) pocket.

The protein belongs to the glutamyl-tRNA reductase family. Homodimer.

The catalysed reaction is (S)-4-amino-5-oxopentanoate + tRNA(Glu) + NADP(+) = L-glutamyl-tRNA(Glu) + NADPH + H(+). The protein operates within porphyrin-containing compound metabolism; protoporphyrin-IX biosynthesis; 5-aminolevulinate from L-glutamyl-tRNA(Glu): step 1/2. Catalyzes the NADPH-dependent reduction of glutamyl-tRNA(Glu) to glutamate 1-semialdehyde (GSA). This chain is Glutamyl-tRNA reductase, found in Klebsiella pneumoniae subsp. pneumoniae (strain ATCC 700721 / MGH 78578).